The sequence spans 189 residues: Adenylate kinase (189 aa).

An ATP-binding site is contributed by 11–16 (GSGKGT). The interval 31-60 (STGDVLRAEIKNGTELGKTAKGYIDQGQLI) is NMP. Residues Thr32, Arg37, 58-60 (QLI), 86-89 (GFPR), and Gln93 each bind AMP. Residues 127–137 (KRGKESGRADD) form an LID region. Arg128 is an ATP binding site. AMP is bound by residues Arg134 and Arg145. Gly173 serves as a coordination point for ATP.

Belongs to the adenylate kinase family. Monomer.

It localises to the cytoplasm. It carries out the reaction AMP + ATP = 2 ADP. It functions in the pathway purine metabolism; AMP biosynthesis via salvage pathway; AMP from ADP: step 1/1. Its function is as follows. Catalyzes the reversible transfer of the terminal phosphate group between ATP and AMP. Plays an important role in cellular energy homeostasis and in adenine nucleotide metabolism. The chain is Adenylate kinase from Bacteroides fragilis (strain ATCC 25285 / DSM 2151 / CCUG 4856 / JCM 11019 / LMG 10263 / NCTC 9343 / Onslow / VPI 2553 / EN-2).